The following is a 94-amino-acid chain: Small ribosomal subunit protein bS18 (94 aa).

It belongs to the bacterial ribosomal protein bS18 family. In terms of assembly, part of the 30S ribosomal subunit. Forms a tight heterodimer with protein bS6.

Binds as a heterodimer with protein bS6 to the central domain of the 16S rRNA, where it helps stabilize the platform of the 30S subunit. In Albidiferax ferrireducens (strain ATCC BAA-621 / DSM 15236 / T118) (Rhodoferax ferrireducens), this protein is Small ribosomal subunit protein bS18.